Reading from the N-terminus, the 272-residue chain is Ribosomal RNA small subunit methyltransferase A (272 aa).

The S-adenosyl-L-methionine site is built by asparagine 18, leucine 20, glycine 45, glutamate 66, aspartate 91, and asparagine 113.

It belongs to the class I-like SAM-binding methyltransferase superfamily. rRNA adenine N(6)-methyltransferase family. RsmA subfamily.

Its subcellular location is the cytoplasm. It catalyses the reaction adenosine(1518)/adenosine(1519) in 16S rRNA + 4 S-adenosyl-L-methionine = N(6)-dimethyladenosine(1518)/N(6)-dimethyladenosine(1519) in 16S rRNA + 4 S-adenosyl-L-homocysteine + 4 H(+). In terms of biological role, specifically dimethylates two adjacent adenosines (A1518 and A1519) in the loop of a conserved hairpin near the 3'-end of 16S rRNA in the 30S particle. May play a critical role in biogenesis of 30S subunits. This Proteus mirabilis (strain HI4320) protein is Ribosomal RNA small subunit methyltransferase A.